A 152-amino-acid polypeptide reads, in one-letter code: Nucleoside diphosphate kinase (152 aa).

Residues Lys-11, Phe-59, Arg-87, Thr-93, Arg-104, and Asn-114 each coordinate ATP. The Pros-phosphohistidine intermediate role is filled by His-117.

Belongs to the NDK family. In terms of assembly, homotetramer. Requires Mg(2+) as cofactor.

It localises to the cytoplasm. It carries out the reaction a 2'-deoxyribonucleoside 5'-diphosphate + ATP = a 2'-deoxyribonucleoside 5'-triphosphate + ADP. The enzyme catalyses a ribonucleoside 5'-diphosphate + ATP = a ribonucleoside 5'-triphosphate + ADP. Functionally, major role in the synthesis of nucleoside triphosphates other than ATP. The ATP gamma phosphate is transferred to the NDP beta phosphate via a ping-pong mechanism, using a phosphorylated active-site intermediate. This is Nucleoside diphosphate kinase from Prochlorococcus marinus (strain MIT 9515).